Here is a 250-residue protein sequence, read N- to C-terminus: N-acetylmuramoyl-L-alanine amidase CwlH (250 aa).

The signal sequence occupies residues 1 to 44 (MVTIKKDFIPVSNDNRPGYAMAPAYITVHNTANTAKGADAKMHA). The N-acetylmuramoyl-L-alanine amidase domain occupies 45 to 141 (KFVKNPNTSE…KKWSGKECPR (97 aa)).

This sequence belongs to the N-acetylmuramoyl-L-alanine amidase 2 family.

The protein resides in the secreted. The enzyme catalyses Hydrolyzes the link between N-acetylmuramoyl residues and L-amino acid residues in certain cell-wall glycopeptides.. Autolysins are involved in some important biological processes such as cell separation, cell-wall turnover, competence for genetic transformation, formation of the flagella and sporulation. Could play a role in mother cell lysis with CwlC. The sequence is that of N-acetylmuramoyl-L-alanine amidase CwlH (cwlH) from Bacillus subtilis (strain 168).